The primary structure comprises 271 residues: MGRSRSRSSSRSKHTKSSKHNKKRSRSRSRSRDKERVRKRSKSRESKRNRRRESRSRSRSTNAAASRRERERASSPPDRIDIFGRTVSKRSSLDEKQKREEEEKKAEFERQRKIRQQEIEEKLIEEETARRVEELVAKRVEEELEKRKDEIEREVLRRVEEAKRIMEKQLLEELERQRQAELAAQKAREEEERAKREELERILEENNRKIAEAQAKLAEEQLRIVEEQRKIHEERMKLEQERQRQQKEEQKIILGKGKSRPKLSFSLKTQD.

Basic residues-rich tracts occupy residues 1–29 (MGRS…RSRS) and 37–58 (VRKR…RSRS). The segment at 1-72 (MGRSRSRSSS…AAASRRERER (72 aa)) is necessary and sufficient for RNA binding. The disordered stretch occupies residues 1 to 112 (MGRSRSRSSS…EKKAEFERQR (112 aa)). A phosphoserine mark is found at serine 58 and serine 60. Threonine 61 carries the post-translational modification Phosphothreonine. Composition is skewed to basic and acidic residues over residues 66-82 (SRRE…RIDI) and 91-112 (SSLD…ERQR). Residues 73–271 (ASSPPDRIDI…KLSFSLKTQD (199 aa)) form a necessary and sufficient for transcriptional regulation region. Phosphoserine occurs at positions 74 and 75. The LXXLL motif 1; degenerate signature appears at 170–174 (LLEEL). Positions 199–203 (LERIL) match the LXXLL motif 2; degenerate motif. Over residues 236–251 (MKLEQERQRQQKEEQK) the composition is skewed to basic and acidic residues. The tract at residues 236–271 (MKLEQERQRQQKEEQKIILGKGKSRPKLSFSLKTQD) is disordered. Serine 264 is modified (phosphoserine).

The protein belongs to the ARGLU1 family. As to quaternary structure, interacts with MED1; the interaction is direct. Interacts with PUF60, U2AF2 and JMJD6; may interact with other proteins involved in RNA processing and splicing. As to expression, high expression levels in the neocortex, hippocampus and thalamus but low expression levels in the midbrain and hindbrain (at protein level). Ubiquitously expressed with highest expression levels in the central nervous system and low expression in uterus and pancreas.

It is found in the nucleus. The protein localises to the nucleus speckle. Its subcellular location is the chromosome. Dual function regulator of gene expression; regulator of transcription and modulator of alternative splicing. General coactivator of nuclear receptor-induced gene expression, including genes activated by the glucocorticoid receptor NR3C1. Binds to a subset of pre-mRNAs and to components of the spliceosome machinery to directly modulate basal alternative splicing; involved in simple and complex cassette exon splicing events. Binds its own pre-mRNA and regulates its alternative splicing and degradation; one of the alternatively spliced products is a stable intronic sequence RNA (sisRNA) that binds the protein to regulate its ability to affect splicing. Binding of the sisRNA stimulates phase separation and localization to nuclear speckles, which may contribute to activation of nuclear receptor-induced gene expression. May also indirectly modulate alternative splicing. Regulates transcription of genes involved in heart development, neuronal cell function, protein localization and chromatin localization. Regulates splicing of genes involved in neurogenesis and chromatin organization. Essential for central nervous system development. Required for the estrogen-dependent expression of ESR1 target genes. Can act in cooperation with MED1. The protein is Arginine and glutamate-rich protein 1 (Arglu1) of Mus musculus (Mouse).